We begin with the raw amino-acid sequence, 71 residues long: Protein MMP24OS (71 aa).

The segment covering 1–10 (MGAQLSGGRG) has biased composition (gly residues). Residues 1 to 61 (MGAQLSGGRG…PSPWGPLDDV (61 aa)) form a disordered region. A compositionally biased stretch (pro residues) spans 36–55 (HPPQPQPQPQPQPQPEPSPW).

The protein is Protein MMP24OS of Homo sapiens (Human).